Reading from the N-terminus, the 353-residue chain is uncharacterized protein (353 aa).

The first 30 residues, 1-30 (MHLRHLFSPRLRGSLLLGSLLVASSFSTLA), serve as a signal peptide directing secretion.

This is an uncharacterized protein from Salmonella typhi.